We begin with the raw amino-acid sequence, 429 residues long: Bifunctional protein GlmU (429 aa).

Positions 1 to 223 (MKTSILILAA…EDEFMGINDK (223 aa)) are pyrophosphorylase. UDP-N-acetyl-alpha-D-glucosamine-binding positions include 8–11 (LAAG), lysine 22, glutamine 74, and 81–82 (GT). Aspartate 102 is a Mg(2+) binding site. 4 residues coordinate UDP-N-acetyl-alpha-D-glucosamine: glycine 135, glutamate 149, asparagine 164, and asparagine 221. A Mg(2+)-binding site is contributed by asparagine 221. Residues 224-244 (FELSIAENFMQEKIKKYWMQQ) form a linker region. Residues 245–429 (GVIFHLPQST…KNYYYKKFQK (185 aa)) form an N-acetyltransferase region. Residues arginine 308 and lysine 325 each contribute to the UDP-N-acetyl-alpha-D-glucosamine site. Histidine 336 acts as the Proton acceptor in catalysis. UDP-N-acetyl-alpha-D-glucosamine is bound by residues tyrosine 339 and asparagine 350. Acetyl-CoA is bound by residues 359–360 (NY), serine 378, alanine 396, and arginine 413.

It in the N-terminal section; belongs to the N-acetylglucosamine-1-phosphate uridyltransferase family. The protein in the C-terminal section; belongs to the transferase hexapeptide repeat family. As to quaternary structure, homotrimer. It depends on Mg(2+) as a cofactor.

The protein localises to the cytoplasm. The catalysed reaction is alpha-D-glucosamine 1-phosphate + acetyl-CoA = N-acetyl-alpha-D-glucosamine 1-phosphate + CoA + H(+). It catalyses the reaction N-acetyl-alpha-D-glucosamine 1-phosphate + UTP + H(+) = UDP-N-acetyl-alpha-D-glucosamine + diphosphate. Its pathway is nucleotide-sugar biosynthesis; UDP-N-acetyl-alpha-D-glucosamine biosynthesis; N-acetyl-alpha-D-glucosamine 1-phosphate from alpha-D-glucosamine 6-phosphate (route II): step 2/2. It participates in nucleotide-sugar biosynthesis; UDP-N-acetyl-alpha-D-glucosamine biosynthesis; UDP-N-acetyl-alpha-D-glucosamine from N-acetyl-alpha-D-glucosamine 1-phosphate: step 1/1. The protein operates within bacterial outer membrane biogenesis; LPS lipid A biosynthesis. Catalyzes the last two sequential reactions in the de novo biosynthetic pathway for UDP-N-acetylglucosamine (UDP-GlcNAc). The C-terminal domain catalyzes the transfer of acetyl group from acetyl coenzyme A to glucosamine-1-phosphate (GlcN-1-P) to produce N-acetylglucosamine-1-phosphate (GlcNAc-1-P), which is converted into UDP-GlcNAc by the transfer of uridine 5-monophosphate (from uridine 5-triphosphate), a reaction catalyzed by the N-terminal domain. This chain is Bifunctional protein GlmU, found in Campylobacter jejuni subsp. doylei (strain ATCC BAA-1458 / RM4099 / 269.97).